Reading from the N-terminus, the 236-residue chain is 4-aminobenzoate synthase (236 aa).

Positions 87, 94, 148, 180, 184, and 187 each coordinate Fe(2+).

This sequence belongs to the CADD family. In terms of assembly, homodimer. It depends on Fe(2+) as a cofactor. Mn(2+) is required as a cofactor.

In terms of biological role, involved in de novo para-aminobenzoate (PABA) biosynthesis. Acts as a self-sacrificing or 'suicide' enzyme that utilizes its own active site tyrosine residue(s) as the substrate for PABA synthesis. The side chain of the tyrosine residue is released from the protein backbone via cleavage of the C(alpha)-C(beta) bond, leaving a glycine in place of the original tyrosine residue. Reaction requires O(2) and a reduced dimetal cofactor. The sequence is that of 4-aminobenzoate synthase from Chlamydia muridarum (strain MoPn / Nigg).